Reading from the N-terminus, the 592-residue chain is Aspartate--tRNA ligase (592 aa).

Glu-171 is an L-aspartate binding site. The aspartate stretch occupies residues 195–198 (QLFK). Arg-217 contacts L-aspartate. ATP-binding positions include 217–219 (RDE) and Gln-226. His-448 provides a ligand contact to L-aspartate. Position 482 (Glu-482) interacts with ATP. Position 489 (Arg-489) interacts with L-aspartate. 534–537 (GLDR) lines the ATP pocket.

This sequence belongs to the class-II aminoacyl-tRNA synthetase family. Type 1 subfamily. As to quaternary structure, homodimer.

Its subcellular location is the cytoplasm. It catalyses the reaction tRNA(Asp) + L-aspartate + ATP = L-aspartyl-tRNA(Asp) + AMP + diphosphate. In terms of biological role, catalyzes the attachment of L-aspartate to tRNA(Asp) in a two-step reaction: L-aspartate is first activated by ATP to form Asp-AMP and then transferred to the acceptor end of tRNA(Asp). The sequence is that of Aspartate--tRNA ligase from Vibrio parahaemolyticus serotype O3:K6 (strain RIMD 2210633).